Consider the following 124-residue polypeptide: Small ribosomal subunit protein uS12 (124 aa).

Asp89 is subject to 3-methylthioaspartic acid.

Belongs to the universal ribosomal protein uS12 family. As to quaternary structure, part of the 30S ribosomal subunit. Contacts proteins S8 and S17. May interact with IF1 in the 30S initiation complex.

Its function is as follows. With S4 and S5 plays an important role in translational accuracy. In terms of biological role, interacts with and stabilizes bases of the 16S rRNA that are involved in tRNA selection in the A site and with the mRNA backbone. Located at the interface of the 30S and 50S subunits, it traverses the body of the 30S subunit contacting proteins on the other side and probably holding the rRNA structure together. The combined cluster of proteins S8, S12 and S17 appears to hold together the shoulder and platform of the 30S subunit. The sequence is that of Small ribosomal subunit protein uS12 from Blochmanniella pennsylvanica (strain BPEN).